Here is a 949-residue protein sequence, read N- to C-terminus: MSDMVDLKKFVTELGKTQKELKNVIEQAKDIGLELKTNFKMTPEQAGKLYKYIVDGIKEQIQANQPTKNPKQDNKDDLNTAATPKPLAKKASKTPKKEETKAQPKPKKTKEKKKEAPAPIIKKKEIEIVNTFENQTPLVENTPKAVSHSQIEKAKQKLQEIQKSREALNKLTQSNTNTTNNANSASNVSNAKKEISEVKKQEQEIKRHENIKRRTGFRVIKRNDETENETENSVTESKKPTQSAAAIFEDIKKEWQEKDKQETKKTKKPSKPKATPTAKNNKSHKIDFSDVRDFKGNDIYDDETDEILLFDLHEQDNLNKEEEEKEARQNINDRVRVQRKNPWMNEAGIKRQSKKKRVFRNDNSQKVIQSAIAIPEEVRVYEFAQKANLNLADVIKTLFNLGLMVTKNDFLDKDSIEILAEEFHLEISVQNTLEEFEVEEVLEGVKKERPPVVTIMGHVDHGKTSLLDKIRDKRVAHTEAGGITQHIGAYMVEKNNKWVSFIDTPGHEAFSQMRNRGAQVTDIAVIVIAADDGVKQQTIEALEHAKAANVPVIFAMNKMDKPNVNPDKLKAECAELGYNPVDWGGEHEFIPVSAKTGDGIDNLLETILIQADIMELKAIEEGSARAVVLEGSVEKGRGAVATVIVQSGTLSVGDSFFAETAFGKVRTMTDDQGKSIQNLKPSMVALITGLSEVPPAGSVLIGVENDSIARLQAQKRATYLRQKALSKSTKVSFDELSEMVANKELKNIPVIIKADTQGSLEAIKNSLLELNNEEVAIQVIHSGVGGITENDLSLVSSSEHAVILGFNIRPTGNVKNKAKEYNVSIKTYTVIYALIEGMRSLLLGLMSPIIEEEHTGQAEVRETFNIPKVGTIAGCVVSDGEIARGIKARLIRDGVVVHTGEILSLKRFKDDVKEVSKGYECGIMLDNYNEIKVGDVFETYKEIHKKRTL.

3 disordered regions span residues 61–122, 139–159, and 171–284; these read IQAN…PIIK, VENT…QKLQ, and LTQS…NKSH. 2 stretches are compositionally biased toward basic and acidic residues: residues 112 to 122 and 150 to 159; these read KKKEAPAPIIK and QIEKAKQKLQ. Positions 174 to 190 are enriched in low complexity; sequence SNTNTTNNANSASNVSN. A compositionally biased stretch (basic and acidic residues) spans 191 to 208; sequence AKKEISEVKKQEQEIKRH. Basic residues predominate over residues 209-220; it reads ENIKRRTGFRVI. Residues 249–264 show a composition bias toward basic and acidic residues; that stretch reads EDIKKEWQEKDKQETK. One can recognise a tr-type G domain in the interval 448–617; the sequence is ERPPVVTIMG…LIQADIMELK (170 aa). Residues 457–464 form a G1 region; that stretch reads GHVDHGKT. 457–464 contributes to the GTP binding site; that stretch reads GHVDHGKT. The interval 482–486 is G2; the sequence is GITQH. A G3 region spans residues 503-506; sequence DTPG. Residues 503–507 and 557–560 each bind GTP; these read DTPGH and NKMD. The interval 557–560 is G4; the sequence is NKMD. The tract at residues 593–595 is G5; that stretch reads SAK.

The protein belongs to the TRAFAC class translation factor GTPase superfamily. Classic translation factor GTPase family. IF-2 subfamily.

Its subcellular location is the cytoplasm. Functionally, one of the essential components for the initiation of protein synthesis. Protects formylmethionyl-tRNA from spontaneous hydrolysis and promotes its binding to the 30S ribosomal subunits. Also involved in the hydrolysis of GTP during the formation of the 70S ribosomal complex. This Helicobacter pylori (strain J99 / ATCC 700824) (Campylobacter pylori J99) protein is Translation initiation factor IF-2 (infB).